We begin with the raw amino-acid sequence, 310 residues long: Bacteriochlorophyll synthase 34 kDa chain (310 aa).

Residues 1 to 13 (MSDMSDQTRLSSP) are compositionally biased toward polar residues. The tract at residues 1 to 20 (MSDMSDQTRLSSPPSLPLHK) is disordered. 8 helical membrane-spanning segments follow: residues 39–59 (VTWF…GALG), 67–87 (LLLG…VVND), 112–132 (HVYI…LFLG), 134–154 (QVAF…LRPI), 166–186 (LVAI…FAPL), 187–207 (TGES…IMTV), 248–268 (VIGL…AILL), and 287–307 (VFFN…AAIG).

The protein resides in the cell membrane. It participates in porphyrin-containing compound metabolism; bacteriochlorophyll biosynthesis (light-independent). Functionally, catalyzes the esterification of bacteriochlorophyllide a by geranylgeraniol-PPi. This is Bacteriochlorophyll synthase 34 kDa chain (bchG) from Chloroflexus aurantiacus (strain ATCC 29366 / DSM 635 / J-10-fl).